Here is a 159-residue protein sequence, read N- to C-terminus: 2-C-methyl-D-erythritol 2,4-cyclodiphosphate synthase (159 aa).

Positions 10 and 12 each coordinate a divalent metal cation. Residues 10-12 (DVH) and 36-37 (HS) each bind 4-CDP-2-C-methyl-D-erythritol 2-phosphate. His44 lines the a divalent metal cation pocket. 4-CDP-2-C-methyl-D-erythritol 2-phosphate-binding positions include 58–60 (DIG), 63–67 (FPDTD), 102–108 (AQAPKMA), 134–137 (TTTE), Phe141, and Arg144.

Belongs to the IspF family. Homotrimer. Requires a divalent metal cation as cofactor.

It catalyses the reaction 4-CDP-2-C-methyl-D-erythritol 2-phosphate = 2-C-methyl-D-erythritol 2,4-cyclic diphosphate + CMP. Its pathway is isoprenoid biosynthesis; isopentenyl diphosphate biosynthesis via DXP pathway; isopentenyl diphosphate from 1-deoxy-D-xylulose 5-phosphate: step 4/6. Functionally, involved in the biosynthesis of isopentenyl diphosphate (IPP) and dimethylallyl diphosphate (DMAPP), two major building blocks of isoprenoid compounds. Catalyzes the conversion of 4-diphosphocytidyl-2-C-methyl-D-erythritol 2-phosphate (CDP-ME2P) to 2-C-methyl-D-erythritol 2,4-cyclodiphosphate (ME-CPP) with a corresponding release of cytidine 5-monophosphate (CMP). The chain is 2-C-methyl-D-erythritol 2,4-cyclodiphosphate synthase from Shewanella halifaxensis (strain HAW-EB4).